The following is a 231-amino-acid chain: 5'-methylthioadenosine/S-adenosylhomocysteine nucleosidase (231 aa).

Glu12 (proton acceptor) is an active-site residue. Substrate contacts are provided by residues Gly78, Val153, and Met174–Glu175. The Proton donor role is filled by Asp198.

It belongs to the PNP/UDP phosphorylase family. MtnN subfamily.

The enzyme catalyses S-adenosyl-L-homocysteine + H2O = S-(5-deoxy-D-ribos-5-yl)-L-homocysteine + adenine. It carries out the reaction S-methyl-5'-thioadenosine + H2O = 5-(methylsulfanyl)-D-ribose + adenine. The catalysed reaction is 5'-deoxyadenosine + H2O = 5-deoxy-D-ribose + adenine. Its pathway is amino-acid biosynthesis; L-methionine biosynthesis via salvage pathway; S-methyl-5-thio-alpha-D-ribose 1-phosphate from S-methyl-5'-thioadenosine (hydrolase route): step 1/2. Catalyzes the irreversible cleavage of the glycosidic bond in both 5'-methylthioadenosine (MTA) and S-adenosylhomocysteine (SAH/AdoHcy) to adenine and the corresponding thioribose, 5'-methylthioribose and S-ribosylhomocysteine, respectively. Also cleaves 5'-deoxyadenosine, a toxic by-product of radical S-adenosylmethionine (SAM) enzymes, into 5-deoxyribose and adenine. This is 5'-methylthioadenosine/S-adenosylhomocysteine nucleosidase from Aliivibrio fischeri (Vibrio fischeri).